The chain runs to 64 residues: Disintegrin (64 aa).

The Disintegrin domain maps to 1–64 (NSVHPCCDPV…SDCPRNRYNH (64 aa)). 4 cysteine pairs are disulfide-bonded: Cys6–Cys29, Cys20–Cys26, Cys25–Cys50, and Cys38–Cys57. Residues 42 to 44 (MLD) carry the Cell attachment site; atypical (MLD) motif.

The protein belongs to the disintegrin family. Dimeric disintegrin subfamily. As to quaternary structure, heterodimer; disulfide-linked. Expressed by the venom gland.

Its subcellular location is the secreted. In terms of biological role, inhibits adhesion of cells expressing alpha-4/beta-1 (ITGA4/ITGB1) and alpha-4/beta-7 (ITGA4/ITGB7) integrins to the natural ligands vascular cell adhesion molecule 1 (VCAM-1) and mucosal addressin cell adhesion molecule 1 (MADCAM-1). This Echis carinatus (Saw-scaled viper) protein is Disintegrin.